The sequence spans 881 residues: MSNTEKNLPTKYDHMSVEEGLYQWWLEGKYFEATGDEKKQPYTIVIPPPNVTGKLHLGHAWDTTLQDILTRTKRMQGYDVLWLPGMDHAGIATQAKVEGKLREEGISRYDLGREKFLEKAWEWKEEYASHIRQQWGKVGLGLDYSRERFTLDKGLSDAVNKVFVQLYEKGLIYRGEYIINWDPATRTALSDIEVIHKEVQGAFYHMNYPLTDGSGHIRLATTRPETMLGDTAVAVHPEDDRYKHLIGKTVTLPIVGREIPIIADEYVEKDFGTGVVKITPAHDPNDFEVGNRHDLPRILVMNEDGSMNEKAGKYNGMDRFECRKELVKDLQEAGVLVEIEPHMHSVGHSERSGAVVEPYLSTQWFVKMAPLAEKAVALQQKEEEKVTFVPERFENTYLRWMENIHDWCISRQLWWGHRIPAWYHKETGEVYVGTEAPADIENWNQDNDVLDTWFSSALWPFSTLGWPNEDSADFKRYYSTDALVTGYDIIFFWVSRMIFQGLEFTGERPFKDVLIHGLVRDEQGRKMSKSLGNGIDPMDVIEKYGADAMRFFLSTGSAPGQDLRFSMEKVESTWNFINKIWNASRFVLMNMDDMKYEEIDLTGEKSVADKWILTRLNETIESVTRNMDKYEFGEAGRSLYNFIWDDFCDWYIEMAKLPLYGEDEAAKKTTRSILAYVLDQTMRLLHPFMPFVTEKIWQHLPHEGESITVAAWPTVREDLQDTEAAAEMHLLVDIIRSVRNIRAEVNTPMSKKVQMQIKAKDEAVLAQLTKNSSYIERFCNPSELTIQTDLQAPEKAMTAIVSGAELFLPLADLINLDEERARLEKELEKFDKEVERVQKKLSNQGFVAKAPAAVIEGERAKEQDYLEKREAVRQRLADLEK.

Positions Pro-49–His-59 match the 'HIGH' region motif. The 'KMSKS' region motif lies at Lys-526–Ser-530. Lys-529 contacts ATP. Positions Leu-810–Lys-881 form a coiled coil.

It belongs to the class-I aminoacyl-tRNA synthetase family. ValS type 1 subfamily. Monomer.

The protein resides in the cytoplasm. It carries out the reaction tRNA(Val) + L-valine + ATP = L-valyl-tRNA(Val) + AMP + diphosphate. Functionally, catalyzes the attachment of valine to tRNA(Val). As ValRS can inadvertently accommodate and process structurally similar amino acids such as threonine, to avoid such errors, it has a 'posttransfer' editing activity that hydrolyzes mischarged Thr-tRNA(Val) in a tRNA-dependent manner. This is Valine--tRNA ligase from Bacillus cereus (strain ATCC 14579 / DSM 31 / CCUG 7414 / JCM 2152 / NBRC 15305 / NCIMB 9373 / NCTC 2599 / NRRL B-3711).